The sequence spans 289 residues: 4-diphosphocytidyl-2-C-methyl-D-erythritol kinase (289 aa).

The active site involves Lys-13. 101 to 111 is a binding site for ATP; that stretch reads PMGGGLGGGSS. The active site involves Asp-143.

Belongs to the GHMP kinase family. IspE subfamily.

The catalysed reaction is 4-CDP-2-C-methyl-D-erythritol + ATP = 4-CDP-2-C-methyl-D-erythritol 2-phosphate + ADP + H(+). It functions in the pathway isoprenoid biosynthesis; isopentenyl diphosphate biosynthesis via DXP pathway; isopentenyl diphosphate from 1-deoxy-D-xylulose 5-phosphate: step 3/6. In terms of biological role, catalyzes the phosphorylation of the position 2 hydroxy group of 4-diphosphocytidyl-2C-methyl-D-erythritol. The polypeptide is 4-diphosphocytidyl-2-C-methyl-D-erythritol kinase (Janthinobacterium sp. (strain Marseille) (Minibacterium massiliensis)).